Reading from the N-terminus, the 152-residue chain is Superoxide dismutase [Cu-Zn] 5 (152 aa).

Cu cation-binding residues include His44, His46, and His61. The cysteines at positions 55 and 144 are disulfide-linked. Zn(2+)-binding residues include His61, His69, His78, and Asp81. Residue His118 coordinates Cu cation.

The protein belongs to the Cu-Zn superoxide dismutase family. The cofactor is Cu cation. Zn(2+) is required as a cofactor.

It carries out the reaction 2 superoxide + 2 H(+) = H2O2 + O2. Destroys radicals which are normally produced within the cells and which are toxic to biological systems. This chain is Superoxide dismutase [Cu-Zn] 5 (sodE), found in Dictyostelium discoideum (Social amoeba).